Here is a 276-residue protein sequence, read N- to C-terminus: Large ribosomal subunit protein uL2 (276 aa).

Disordered stretches follow at residues 1–20 (MGIKKYNPTTNGRRNMTTND) and 219–276 (TVRG…RRKK). The segment covering 7–20 (NPTTNGRRNMTTND) has biased composition (polar residues).

This sequence belongs to the universal ribosomal protein uL2 family. Part of the 50S ribosomal subunit. Forms a bridge to the 30S subunit in the 70S ribosome.

Functionally, one of the primary rRNA binding proteins. Required for association of the 30S and 50S subunits to form the 70S ribosome, for tRNA binding and peptide bond formation. It has been suggested to have peptidyltransferase activity; this is somewhat controversial. Makes several contacts with the 16S rRNA in the 70S ribosome. This chain is Large ribosomal subunit protein uL2, found in Bacillus mycoides (strain KBAB4) (Bacillus weihenstephanensis).